We begin with the raw amino-acid sequence, 179 residues long: Large ribosomal subunit protein uL5 (179 aa).

The protein belongs to the universal ribosomal protein uL5 family. As to quaternary structure, part of the 50S ribosomal subunit; part of the 5S rRNA/L5/L18/L25 subcomplex. Contacts the 5S rRNA and the P site tRNA. Forms a bridge to the 30S subunit in the 70S ribosome.

Functionally, this is one of the proteins that bind and probably mediate the attachment of the 5S RNA into the large ribosomal subunit, where it forms part of the central protuberance. In the 70S ribosome it contacts protein S13 of the 30S subunit (bridge B1b), connecting the 2 subunits; this bridge is implicated in subunit movement. Contacts the P site tRNA; the 5S rRNA and some of its associated proteins might help stabilize positioning of ribosome-bound tRNAs. The chain is Large ribosomal subunit protein uL5 from Klebsiella pneumoniae (strain 342).